A 356-amino-acid polypeptide reads, in one-letter code: Heat-inducible transcription repressor HrcA (356 aa).

This sequence belongs to the HrcA family.

Its function is as follows. Negative regulator of class I heat shock genes (grpE-dnaK-dnaJ and groELS operons). Prevents heat-shock induction of these operons. The protein is Heat-inducible transcription repressor HrcA of Gluconobacter oxydans (strain 621H) (Gluconobacter suboxydans).